The primary structure comprises 242 residues: ATP synthase subunit a (242 aa).

5 helical membrane passes run 28–48 (LHGQ…LLVV), 89–109 (LPFV…GALI), 128–148 (INTT…AGLS), 193–213 (LVVA…AMFL), and 214–234 (GLFT…NYIG).

Belongs to the ATPase A chain family. In terms of assembly, F-type ATPases have 2 components, CF(1) - the catalytic core - and CF(0) - the membrane proton channel. CF(1) has five subunits: alpha(3), beta(3), gamma(1), delta(1), epsilon(1). CF(0) has four main subunits: a, b, b' and c.

The protein resides in the cellular thylakoid membrane. Functionally, key component of the proton channel; it plays a direct role in the translocation of protons across the membrane. In Synechococcus sp. (strain WH7803), this protein is ATP synthase subunit a.